Reading from the N-terminus, the 464-residue chain is Argininosuccinate lyase (464 aa).

Belongs to the lyase 1 family. Argininosuccinate lyase subfamily.

It localises to the cytoplasm. The catalysed reaction is 2-(N(omega)-L-arginino)succinate = fumarate + L-arginine. The protein operates within amino-acid biosynthesis; L-arginine biosynthesis; L-arginine from L-ornithine and carbamoyl phosphate: step 3/3. The protein is Argininosuccinate lyase of Pseudomonas savastanoi pv. phaseolicola (strain 1448A / Race 6) (Pseudomonas syringae pv. phaseolicola (strain 1448A / Race 6)).